The primary structure comprises 36 residues: Potassium channel toxin alpha-KTx 6.14 (36 aa).

4 cysteine pairs are disulfide-bonded: C5–C25, C11–C30, C15–C32, and C20–C35.

As to expression, expressed by the venom gland.

It localises to the secreted. Blocks Shaker B channels expressed in Sf9 cells, with a dissociation constant of 52 nM. This Hoffmannihadrurus gertschi (Scorpion) protein is Potassium channel toxin alpha-KTx 6.14.